The following is a 425-amino-acid chain: Enolase (425 aa).

Q162 contacts (2R)-2-phosphoglycerate. E204 (proton donor) is an active-site residue. The Mg(2+) site is built by D241, E284, and D311. Residues K336, R365, S366, and K387 each coordinate (2R)-2-phosphoglycerate. The Proton acceptor role is filled by K336.

The protein belongs to the enolase family. It depends on Mg(2+) as a cofactor.

The protein localises to the cytoplasm. The protein resides in the secreted. It is found in the cell surface. The enzyme catalyses (2R)-2-phosphoglycerate = phosphoenolpyruvate + H2O. Its pathway is carbohydrate degradation; glycolysis; pyruvate from D-glyceraldehyde 3-phosphate: step 4/5. In terms of biological role, catalyzes the reversible conversion of 2-phosphoglycerate (2-PG) into phosphoenolpyruvate (PEP). It is essential for the degradation of carbohydrates via glycolysis. The sequence is that of Enolase from Brucella ovis (strain ATCC 25840 / 63/290 / NCTC 10512).